A 750-amino-acid polypeptide reads, in one-letter code: Photosystem I P700 chlorophyll a apoprotein A1 (750 aa).

Helical transmembrane passes span 70 to 93 (VFSA…FHGA), 156 to 179 (LYCT…FHYH), 195 to 219 (LNHH…HVSL), 291 to 309 (IAHH…GHMY), 346 to 369 (WHAQ…HHMY), 385 to 411 (LSLF…IFMV), 433 to 455 (AIIS…LYIH), and 531 to 549 (FLVH…LILL). [4Fe-4S] cluster-binding residues include Cys573 and Cys582. Transmembrane regions (helical) follow at residues 589-610 (HVFL…HFSW) and 664-686 (LSAY…MFLF). Chlorophyll a' is bound at residue His675. Residues Met683 and Tyr691 each contribute to the chlorophyll a site. A phylloquinone-binding site is contributed by Trp692. Residues 724-744 (AVGVTHYLLGGIATTWAFFLA) form a helical membrane-spanning segment.

It belongs to the PsaA/PsaB family. As to quaternary structure, the PsaA/B heterodimer binds the P700 chlorophyll special pair and subsequent electron acceptors. PSI consists of a core antenna complex that captures photons, and an electron transfer chain that converts photonic excitation into a charge separation. The eukaryotic PSI reaction center is composed of at least 11 subunits. It depends on P700 is a chlorophyll a/chlorophyll a' dimer, A0 is one or more chlorophyll a, A1 is one or both phylloquinones and FX is a shared 4Fe-4S iron-sulfur center. as a cofactor.

It localises to the plastid. Its subcellular location is the chloroplast thylakoid membrane. The enzyme catalyses reduced [plastocyanin] + hnu + oxidized [2Fe-2S]-[ferredoxin] = oxidized [plastocyanin] + reduced [2Fe-2S]-[ferredoxin]. Its function is as follows. PsaA and PsaB bind P700, the primary electron donor of photosystem I (PSI), as well as the electron acceptors A0, A1 and FX. PSI is a plastocyanin-ferredoxin oxidoreductase, converting photonic excitation into a charge separation, which transfers an electron from the donor P700 chlorophyll pair to the spectroscopically characterized acceptors A0, A1, FX, FA and FB in turn. Oxidized P700 is reduced on the lumenal side of the thylakoid membrane by plastocyanin. The protein is Photosystem I P700 chlorophyll a apoprotein A1 of Liriodendron tulipifera (Tuliptree).